Here is a 308-residue protein sequence, read N- to C-terminus: Glutaminase (308 aa).

Substrate-binding residues include S66, N117, E161, N168, Y192, Y244, and V262.

The protein belongs to the glutaminase family. In terms of assembly, homotetramer.

The catalysed reaction is L-glutamine + H2O = L-glutamate + NH4(+). The protein is Glutaminase of Shigella dysenteriae serotype 1 (strain Sd197).